We begin with the raw amino-acid sequence, 262 residues long: Thiazole synthase (262 aa).

Residue K96 is the Schiff-base intermediate with DXP of the active site. 1-deoxy-D-xylulose 5-phosphate-binding positions include G157, 184-185, and 206-207; these read AG and NT.

This sequence belongs to the ThiG family. As to quaternary structure, homotetramer. Forms heterodimers with either ThiH or ThiS.

It localises to the cytoplasm. The catalysed reaction is [ThiS sulfur-carrier protein]-C-terminal-Gly-aminoethanethioate + 2-iminoacetate + 1-deoxy-D-xylulose 5-phosphate = [ThiS sulfur-carrier protein]-C-terminal Gly-Gly + 2-[(2R,5Z)-2-carboxy-4-methylthiazol-5(2H)-ylidene]ethyl phosphate + 2 H2O + H(+). Its pathway is cofactor biosynthesis; thiamine diphosphate biosynthesis. Functionally, catalyzes the rearrangement of 1-deoxy-D-xylulose 5-phosphate (DXP) to produce the thiazole phosphate moiety of thiamine. Sulfur is provided by the thiocarboxylate moiety of the carrier protein ThiS. In vitro, sulfur can be provided by H(2)S. The chain is Thiazole synthase from Legionella pneumophila (strain Corby).